The following is a 203-amino-acid chain: Ribosome-binding factor A (203 aa).

The span at 119–141 (LAEVRRDARPAGDEDPYRRPRTV) shows a compositional bias: basic and acidic residues. The tract at residues 119-203 (LAEVRRDARP…SPGGDPTAGR (85 aa)) is disordered. The segment covering 142–169 (DEDDEDEDEDLVDEFDEFDRVEELDADA) has biased composition (acidic residues).

It belongs to the RbfA family. In terms of assembly, monomer. Binds 30S ribosomal subunits, but not 50S ribosomal subunits or 70S ribosomes.

It localises to the cytoplasm. Its function is as follows. One of several proteins that assist in the late maturation steps of the functional core of the 30S ribosomal subunit. Associates with free 30S ribosomal subunits (but not with 30S subunits that are part of 70S ribosomes or polysomes). Required for efficient processing of 16S rRNA. May interact with the 5'-terminal helix region of 16S rRNA. The sequence is that of Ribosome-binding factor A from Frankia alni (strain DSM 45986 / CECT 9034 / ACN14a).